Here is a 296-residue protein sequence, read N- to C-terminus: (+)-neomenthol dehydrogenase (296 aa).

16–40 contributes to the NADP(+) binding site; it reads RGIGFEICRQLASEGIRVVLTSRDE. A substrate-binding site is contributed by S164. The Proton acceptor role is filled by Y220.

It belongs to the short-chain dehydrogenases/reductases (SDR) family. In terms of assembly, monomer.

Its subcellular location is the cytoplasm. It carries out the reaction (+)-neomenthol + NADP(+) = (1R,4S)-menthone + NADPH + H(+). Its function is as follows. Aldehyde reductase that catalyzes the reduction of the aldehyde carbonyl groups on saturated and alpha,beta-unsaturated aldehydes with more than 5 carbons. Involved in basal resistance against pathogens. This Arabidopsis thaliana (Mouse-ear cress) protein is (+)-neomenthol dehydrogenase (SDR1).